The chain runs to 294 residues: uncharacterized protein (294 aa).

2 disordered regions span residues 1 to 148 (MFLR…LEKP) and 268 to 294 (DEAA…GKGL). Phosphoserine is present on residues Ser34 and Ser35. Positions 35 to 44 (SSENSGSDWD) are enriched in low complexity. Over residues 52-62 (DVGHPKTKDSG) the composition is skewed to basic and acidic residues. Ser71 and Ser90 each carry phosphoserine. 2 stretches are compositionally biased toward basic and acidic residues: residues 73–92 (PSKE…DSLK) and 278–294 (GLER…GKGL).

This is an uncharacterized protein from Homo sapiens (Human).